Reading from the N-terminus, the 472-residue chain is 3-isopropylmalate dehydratase large subunit (472 aa).

Cysteine 353, cysteine 414, and cysteine 417 together coordinate [4Fe-4S] cluster.

The protein belongs to the aconitase/IPM isomerase family. LeuC type 1 subfamily. In terms of assembly, heterodimer of LeuC and LeuD. The cofactor is [4Fe-4S] cluster.

The catalysed reaction is (2R,3S)-3-isopropylmalate = (2S)-2-isopropylmalate. The protein operates within amino-acid biosynthesis; L-leucine biosynthesis; L-leucine from 3-methyl-2-oxobutanoate: step 2/4. Functionally, catalyzes the isomerization between 2-isopropylmalate and 3-isopropylmalate, via the formation of 2-isopropylmaleate. This chain is 3-isopropylmalate dehydratase large subunit, found in Psychrobacter arcticus (strain DSM 17307 / VKM B-2377 / 273-4).